Here is a 694-residue protein sequence, read N- to C-terminus: Methionine--tRNA ligase (694 aa).

Residues 14–24 (PYANGPIHLGH) carry the 'HIGH' region motif. Residues Cys145, Cys148, Cys158, and Cys161 each coordinate Zn(2+). The short motif at 330–334 (KMSKS) is the 'KMSKS' region element. Lys333 contributes to the ATP binding site. Residues 558–579 (SLQATAGQPEPHSQVRHAEHQQ) form a disordered region. In terms of domain architecture, tRNA-binding spans 593 to 694 (DFAKVDLRIA…EGAQPGMKVK (102 aa)).

It belongs to the class-I aminoacyl-tRNA synthetase family. MetG type 1 subfamily. As to quaternary structure, homodimer. The cofactor is Zn(2+).

The protein resides in the cytoplasm. It carries out the reaction tRNA(Met) + L-methionine + ATP = L-methionyl-tRNA(Met) + AMP + diphosphate. Functionally, is required not only for elongation of protein synthesis but also for the initiation of all mRNA translation through initiator tRNA(fMet) aminoacylation. The protein is Methionine--tRNA ligase of Methylococcus capsulatus (strain ATCC 33009 / NCIMB 11132 / Bath).